A 155-amino-acid chain; its full sequence is Endoribonuclease YbeY (155 aa).

Residues His-116, His-120, and His-126 each coordinate Zn(2+).

This sequence belongs to the endoribonuclease YbeY family. It depends on Zn(2+) as a cofactor.

It localises to the cytoplasm. Single strand-specific metallo-endoribonuclease involved in late-stage 70S ribosome quality control and in maturation of the 3' terminus of the 16S rRNA. The sequence is that of Endoribonuclease YbeY from Colwellia psychrerythraea (strain 34H / ATCC BAA-681) (Vibrio psychroerythus).